The following is a 490-amino-acid chain: Pleckstrin homology domain-containing family O member 2 (490 aa).

The PH domain occupies methionine 18–asparagine 119. 2 positions are modified to phosphoserine: serine 164 and serine 167. Positions leucine 173–proline 402 are disordered. The span at alanine 230–glutamate 243 shows a compositional bias: low complexity. At threonine 232 the chain carries Phosphothreonine. Serine 235, serine 237, and serine 238 each carry phosphoserine. The segment covering serine 244–glycine 257 has biased composition (acidic residues). Phosphoserine is present on serine 273. A compositionally biased stretch (low complexity) spans proline 277–glutamate 297. 2 positions are modified to phosphothreonine: threonine 298 and threonine 311. Residues serine 390 and serine 468 each carry the phosphoserine modification. Positions serine 439–leucine 481 form a coiled coil.

In Homo sapiens (Human), this protein is Pleckstrin homology domain-containing family O member 2 (PLEKHO2).